The primary structure comprises 140 residues: Fatty acid-binding protein 12 (140 aa).

Residues arginine 107 and 127–129 each bind a fatty acid; that span reads RTY.

The protein belongs to the calycin superfamily. Fatty-acid binding protein (FABP) family. As to expression, expressed in a number of retinoblastoma cell lines.

Functionally, may play a role in lipid transport. The protein is Fatty acid-binding protein 12 (FABP12) of Homo sapiens (Human).